Here is a 262-residue protein sequence, read N- to C-terminus: Transcription factor Spi-B (262 aa).

The interval 1–31 is TAD1 (Acidic); the sequence is MLALEAAQLDGPHFSCLYPDGVFYDLDSCKH. Residues 41–61 are TAD2; sequence PDSLWDWTVAPPVPATPYEAF. A disordered region spans residues 140-163; the sequence is ALEVSDSESDEALVAGPEGKGSEA. A DNA-binding region (ETS) is located at residues 169 to 252; sequence LRLYQFLLGL…VKRKLTYQFD (84 aa).

This sequence belongs to the ETS family. In terms of assembly, can form homotypic interactions. Interacts with IRF4/Pip. Interacts with JUN. Interacts with TBP. May also interact with CREBBP and EP300. Interacts with NONO/p54(nrb). Expressed in plasmacytoid dendritic cells (pDCs) and B-cells, not expressed in T-cells or granulocytes. May also be enriched in stem cell populations of the liver.

The protein resides in the nucleus. It localises to the cytoplasm. In terms of biological role, sequence specific transcriptional activator which binds to the PU-box, a purine-rich DNA sequence (5'-GAGGAA-3') that can act as a lymphoid-specific enhancer. Promotes development of plasmacytoid dendritic cells (pDCs), also known as type 2 DC precursors (pre-DC2) or natural interferon (IFN)-producing cells. These cells have the capacity to produce large amounts of interferon and block viral replication. May be required for B-cell receptor (BCR) signaling, which is necessary for normal B-cell development and antigenic stimulation. The sequence is that of Transcription factor Spi-B (SPIB) from Homo sapiens (Human).